Reading from the N-terminus, the 85-residue chain is Large ribosomal subunit protein bL31B (85 aa).

It belongs to the bacterial ribosomal protein bL31 family. Type B subfamily. As to quaternary structure, part of the 50S ribosomal subunit.

The sequence is that of Large ribosomal subunit protein bL31B from Stutzerimonas stutzeri (strain A1501) (Pseudomonas stutzeri).